The chain runs to 440 residues: Xaa-Pro dipeptidase (440 aa).

Aspartate 244, aspartate 255, histidine 335, glutamate 380, and glutamate 419 together coordinate Mn(2+).

It belongs to the peptidase M24B family. Bacterial-type prolidase subfamily. It depends on Mn(2+) as a cofactor.

It carries out the reaction Xaa-L-Pro dipeptide + H2O = an L-alpha-amino acid + L-proline. Its function is as follows. Splits dipeptides with a prolyl residue in the C-terminal position. This chain is Xaa-Pro dipeptidase, found in Shewanella halifaxensis (strain HAW-EB4).